The primary structure comprises 60 residues: Large ribosomal subunit protein bL32 (60 aa).

Belongs to the bacterial ribosomal protein bL32 family.

The sequence is that of Large ribosomal subunit protein bL32 from Streptococcus pneumoniae serotype 19F (strain G54).